Consider the following 55-residue polypeptide: uncharacterized protein (55 aa).

Residues 27–47 form a helical membrane-spanning segment; it reads IFLIYHFSPIYCPYLFLFTVF.

It localises to the membrane. This is an uncharacterized protein from Acheta domesticus (House cricket).